Consider the following 161-residue polypeptide: RNA pyrophosphohydrolase (161 aa).

A Nudix hydrolase domain is found at 12-154; that stretch reads PYRIGVGMVI…KRKLYKAVIN (143 aa). Residues 46 to 67 carry the Nudix box motif; that stretch reads GGIILGETYSKAVLREMKEEIG.

The protein belongs to the Nudix hydrolase family. RppH subfamily. A divalent metal cation is required as a cofactor.

Functionally, accelerates the degradation of transcripts by removing pyrophosphate from the 5'-end of triphosphorylated RNA, leading to a more labile monophosphorylated state that can stimulate subsequent ribonuclease cleavage. This is RNA pyrophosphohydrolase from Orientia tsutsugamushi (strain Boryong) (Rickettsia tsutsugamushi).